The chain runs to 295 residues: Tyrosine recombinase XerD (295 aa).

A Core-binding (CB) domain is found at 1 to 85; it reads METIIEEYLK…TIRSFHQFAL (85 aa). In terms of domain architecture, Tyr recombinase spans 106–289; the sequence is KLPDVLDVEE…SKTQIRQMYN (184 aa). Residues arginine 146, lysine 170, histidine 241, arginine 244, and histidine 267 contribute to the active site. Tyrosine 276 acts as the O-(3'-phospho-DNA)-tyrosine intermediate in catalysis.

Belongs to the 'phage' integrase family. XerD subfamily. As to quaternary structure, forms a cyclic heterotetrameric complex composed of two molecules of XerC and two molecules of XerD.

Its subcellular location is the cytoplasm. Functionally, site-specific tyrosine recombinase, which acts by catalyzing the cutting and rejoining of the recombining DNA molecules. The XerC-XerD complex is essential to convert dimers of the bacterial chromosome into monomers to permit their segregation at cell division. It also contributes to the segregational stability of plasmids. In Staphylococcus haemolyticus (strain JCSC1435), this protein is Tyrosine recombinase XerD.